A 185-amino-acid chain; its full sequence is Folate transporter FolT (185 aa).

A run of 4 helical transmembrane segments spans residues 34–54, 64–84, 114–134, and 157–177; these read LTVG…SLIA, LIAA…AFFV, VAVG…WLVM, and LIMF…QVIS.

In E.coli forms a stable energy-coupling factor (ECF) transporter complex probably composed of a membrane-embedded substrate-binding protein (S component), two ATP-binding proteins (A components) and a transmembrane protein (T component).

The protein resides in the cell membrane. Functionally, folate-binding protein that interacts with the energy-coupling factor (ECF) ABC-transporter complex. Unlike classic ABC transporters this ECF transporter provides the energy necessary to transport a number of different substrates. The substrates themselves are bound by transmembrane, not extracytoplasmic soluble proteins. Upon coexpression with EcfA1A2T in E.coli allows 5-formyltetrahydrofolate uptake; uptake requires both FolT and EcfA1A2T. The protein is Folate transporter FolT (folT) of Leuconostoc mesenteroides subsp. mesenteroides (strain ATCC 8293 / DSM 20343 / BCRC 11652 / CCM 1803 / JCM 6124 / NCDO 523 / NBRC 100496 / NCIMB 8023 / NCTC 12954 / NRRL B-1118 / 37Y).